The following is a 675-amino-acid chain: Putative acyl-coenzyme A oxidase 3.2, peroxisomal (675 aa).

A peroxisome-targeting transit peptide spans 1–34 (MSENVELRRAHILANHILRSPRPSSNPSLTPEVC). 442–457 (AVGGQGLKTENRVGHL) lines the FAD pocket.

Belongs to the acyl-CoA oxidase family. FAD is required as a cofactor.

It localises to the peroxisome. It carries out the reaction a 2,3-saturated acyl-CoA + O2 = a (2E)-enoyl-CoA + H2O2. In terms of biological role, catalyzes the desaturation of acyl-CoAs to 2-trans-enoyl-CoAs. The chain is Putative acyl-coenzyme A oxidase 3.2, peroxisomal (ACX3.2) from Arabidopsis thaliana (Mouse-ear cress).